Consider the following 489-residue polypeptide: Virion host shutoff protein (489 aa).

Disordered regions lie at residues 110 to 135, 142 to 161, 285 to 316, and 333 to 363; these read EEAS…AFSN, SLAS…PSAA, RSQT…GGTE, and YEDD…ILTP. A compositionally biased stretch (polar residues) spans 124 to 134; sequence ITDSRPSSAFS.

It belongs to the herpesviridae VHS protein family. Interacts with human EIF4H, EIF4A1 and EIF4A2; interaction with eIF4AI and EIF4A2 presumably allows Vhs protein to associate with the eIF4F cap-binding complex.

Its subcellular location is the virion. Minor structural protein that acts as an endoribonuclease during lytic infection. Degrades host mRNAs in the cytoplasm by cutting them at preferred sites, including some in regions of translation initiation. Together with inhibition of host splicing by ICP27, contributes to an overall decrease in host protein synthesis. Also, after the onset of viral transcription, accelerates the turnover of viral mRNA, thereby facilitating the sequential expression of different classes of viral genes. Binds translation initiation factors eIF4H, eIF4AI, and eIF4AII, thereby may interact directly with the translation initiation complex and thus digest specifically mRNAs. Also impedes antigen presentation by major histocompatibility complex class I and class II molecules, inhibits secretion of cytokines that would otherwise recruit lymphocytes and neutrophils cells to the site of infection and blocks the activation of dendritic cells. Impedes the alpha/beta interferon-mediated response to infection by evading the cGAS/ STING-mediated DNA-sensing pathway and degrading CGAS via its RNase activity. This Human herpesvirus 1 (strain KOS) (HHV-1) protein is Virion host shutoff protein (UL41).